We begin with the raw amino-acid sequence, 577 residues long: Laccase-25 (577 aa).

The first 22 residues, 1–22 (MTLHWSLLLFIAIALVSSVAQA), serve as a signal peptide directing secretion. Plastocyanin-like domains lie at 30–147 (NVGN…PRGG) and 158–313 (KEHV…YAGA). Asn33 carries N-linked (GlcNAc...) asparagine glycosylation. Positions 81 and 83 each coordinate Cu cation. An N-linked (GlcNAc...) asparagine glycan is attached at Asn109. The Cu cation site is built by His126 and His128. 10 N-linked (GlcNAc...) asparagine glycosylation sites follow: Asn169, Asn203, Asn208, Asn218, Asn332, Asn383, Asn396, Asn404, Asn441, and Asn459. The Plastocyanin-like 3 domain occupies 423–560 (DFPDTPPVVF…AMVLEVLDGP (138 aa)). Cu cation-binding residues include His477, His480, His482, His539, Cys540, His541, and His545.

The protein belongs to the multicopper oxidase family. It depends on Cu cation as a cofactor.

The protein resides in the secreted. The protein localises to the extracellular space. Its subcellular location is the apoplast. The enzyme catalyses 4 hydroquinone + O2 = 4 benzosemiquinone + 2 H2O. Functionally, lignin degradation and detoxification of lignin-derived products. The chain is Laccase-25 (LAC25) from Oryza sativa subsp. japonica (Rice).